The chain runs to 735 residues: MKPTTNGGLLASQSSSSFSFPRFRGQLPIIFSANNNQKKKNLPNPNVVTLCLHSHSNVSSSQIAVTRRAILVAPPLLAAAASLFLSISSAASAETSAESVALPPVATAPPPPPVEKEEAITSRIYDASVLGEPMAVGKDKKRVWEKLLNARIVYLGEAEQVPTRDDKVLELEIVRNLRKRCIESDRQLSLALEAFPLDLQEQLNQYMDKRMDGEVLKSYVSHWPVQRWQEYEPLLSYCRDNGVKLIACGTPLKVLRTVQAEGIRGLSESERKLYTPPAGSGFISGFTSFSRSSSLNMNPLTQIVPFGPSSYLSAQARVVEDHTMSQVIVQAVADGGGTGMLVVVTGANHVEYGSRGTGLPARISRKIPKKSQLVVLLDPERQFLRKEGESPVADFLWYSAARPCSRNCFDRAEIARVMNAAGRRRDALPQDIQKGLDLGLVSPEILQNFFDLEQYPLISELTQRFQGFRERLLADPKFLNRLAIEEAISITTTLVAQYEKRKENFFEELDYVITDSVRASVVDFFTVWLPAPTLSFISYADETIGPNSIDALRGLLGSIPDNAFQKSLGGQEWTLSLRIASVIIGGLKLAGVGVVSSFAAVGSSNALYAIRKFIKPELGVGEQAKRSPMLKTALVYGGYLGTSSNIRYQIIAGLIEHRISDELSSQPLLVNMISFVVRVANSYFGTQQWIDLARSTGLQTQKSVTTSNQIPEVASQSTVEYSTTEEASMDDLKNQ.

A chloroplast-targeting transit peptide spans 1–75 (MKPTTNGGLL…TRRAILVAPP (75 aa)). The next 2 helical transmembrane spans lie at 519 to 539 (ASVV…FISY) and 582 to 602 (VIIG…AAVG). The segment covering 714-726 (ASQSTVEYSTTEE) has biased composition (polar residues). The interval 714–735 (ASQSTVEYSTTEEASMDDLKNQ) is disordered.

It belongs to the RETICULATA family.

The protein localises to the plastid. It is found in the chloroplast membrane. In terms of biological role, may play a role in leaf development. The chain is Protein RETICULATA-RELATED 5, chloroplastic from Arabidopsis thaliana (Mouse-ear cress).